The chain runs to 593 residues: Double-stranded RNA-binding protein 2 (593 aa).

DRBM domains follow at residues 1-70 (MYKN…ELSK) and 87-155 (IYKN…ELKQ). The segment covering 188 to 197 (LNQTNGGKTP) has biased composition (polar residues). 3 disordered regions span residues 188–221 (LNQT…KSNA), 357–408 (APDF…ESNQ), and 546–593 (VNSS…KLHI). The span at 205–219 (SSNRPSSRRPSYPKS) shows a compositional bias: low complexity. The segment covering 378 to 408 (ESSPASEQESKSHTASSSATRSPSQQLESNQ) has biased composition (polar residues). Residues 572-586 (RTNTSDTSNAATASS) are compositionally biased toward low complexity.

In terms of biological role, binds double-stranded RNA. In Oryza sativa subsp. japonica (Rice), this protein is Double-stranded RNA-binding protein 2 (DRB2).